A 370-amino-acid chain; its full sequence is Anhydro-N-acetylmuramic acid kinase (370 aa).

13-20 (GTSMDGVD) provides a ligand contact to ATP.

Belongs to the anhydro-N-acetylmuramic acid kinase family.

It carries out the reaction 1,6-anhydro-N-acetyl-beta-muramate + ATP + H2O = N-acetyl-D-muramate 6-phosphate + ADP + H(+). Its pathway is amino-sugar metabolism; 1,6-anhydro-N-acetylmuramate degradation. It participates in cell wall biogenesis; peptidoglycan recycling. Functionally, catalyzes the specific phosphorylation of 1,6-anhydro-N-acetylmuramic acid (anhMurNAc) with the simultaneous cleavage of the 1,6-anhydro ring, generating MurNAc-6-P. Is required for the utilization of anhMurNAc either imported from the medium or derived from its own cell wall murein, and thus plays a role in cell wall recycling. The polypeptide is Anhydro-N-acetylmuramic acid kinase (Shewanella frigidimarina (strain NCIMB 400)).